Consider the following 724-residue polypeptide: Transcription factor dcp-66 (724 aa).

Polar residues-rich tracts occupy residues 1-12 and 56-70; these read MAQVQQVPSSPM and GAST…QLSP. 2 disordered regions span residues 1–23 and 55–129; these read MAQV…GNGL and NGAS…KRRL. Residues 85–95 show a composition bias toward basic and acidic residues; the sequence is AQEKIKLKDDI. Residues 105–119 show a composition bias toward acidic residues; it reads DDDDMEDEELGDEIN. Positions 186–216 form a coiled coil; the sequence is EEQLRERLNMRREAENQLREEEAKLLVLRKM. Disordered regions lie at residues 328–361 and 523–590; these read KELS…QITQ and AAPA…QLQQ. Over residues 332–358 the composition is skewed to low complexity; sequence AAETNASASASPAVQQSQQAQQPQQAQ. Composition is skewed to polar residues over residues 527 to 541 and 551 to 564; these read TSQT…TVSS and IPSS…TQAV. Over residues 565 to 590 the composition is skewed to low complexity; sequence KTSTPIHSTPKSSSSSAKKTAAQLQQ.

As to expression, expressed at low levels in excretory cell, pharynx, vulva, and posterior neurons in adults. Strongly expressed in the excretory cell and more weakly in the pharynx in larva. Embryonic expression in the excretory cell.

It localises to the nucleus. Its function is as follows. Transcription factor which binds to the 5'-CCATACATTA-3' motif found in the promoter region of pgp-12 and activates its expression in the excretory cell. The sequence is that of Transcription factor dcp-66 from Caenorhabditis elegans.